A 282-amino-acid chain; its full sequence is Bifunctional protein FolD 2 (282 aa).

NADP(+)-binding positions include 164–166 and S189; that span reads GRS.

This sequence belongs to the tetrahydrofolate dehydrogenase/cyclohydrolase family. As to quaternary structure, homodimer.

The catalysed reaction is (6R)-5,10-methylene-5,6,7,8-tetrahydrofolate + NADP(+) = (6R)-5,10-methenyltetrahydrofolate + NADPH. The enzyme catalyses (6R)-5,10-methenyltetrahydrofolate + H2O = (6R)-10-formyltetrahydrofolate + H(+). It functions in the pathway one-carbon metabolism; tetrahydrofolate interconversion. In terms of biological role, catalyzes the oxidation of 5,10-methylenetetrahydrofolate to 5,10-methenyltetrahydrofolate and then the hydrolysis of 5,10-methenyltetrahydrofolate to 10-formyltetrahydrofolate. This chain is Bifunctional protein FolD 2, found in Lactobacillus johnsonii (strain CNCM I-12250 / La1 / NCC 533).